Reading from the N-terminus, the 335-residue chain is Deoxyhypusine hydroxylase (335 aa).

5 HEAT-like PBS-type repeats span residues 71-97 (LKHELAYCLGQTRNPESVPYLQEVVKD), 104-130 (CRHEAAEALGALGYEDSLEILKVLRDN), 200-233 (QRYRAMFALRDLASPPDLPTATHAVEALAKGLKD), 238-264 (FRHEIAFVFGQLSHPASIPSLTEALSD), and 271-298 (VRHEAAEALGSLGDCEGVEDTLKKFLND). Residues H73, E74, H106, and E107 each coordinate Fe cation. Residues H240, E241, H273, and E274 each contribute to the Fe cation site.

The protein belongs to the deoxyhypusine hydroxylase family. Requires Fe(2+) as cofactor.

It localises to the cytoplasm. Its subcellular location is the nucleus. It catalyses the reaction [eIF5A protein]-deoxyhypusine + AH2 + O2 = [eIF5A protein]-hypusine + A + H2O. It functions in the pathway protein modification; eIF5A hypusination. Catalyzes the hydroxylation of the N(6)-(4-aminobutyl)-L-lysine intermediate to form hypusine, an essential post-translational modification only found in mature eIF-5A factor. The sequence is that of Deoxyhypusine hydroxylase (lia1) from Aspergillus clavatus (strain ATCC 1007 / CBS 513.65 / DSM 816 / NCTC 3887 / NRRL 1 / QM 1276 / 107).